Consider the following 222-residue polypeptide: Uridine kinase (222 aa).

G13–T20 serves as a coordination point for ATP.

It belongs to the uridine kinase family.

Its subcellular location is the cytoplasm. The catalysed reaction is uridine + ATP = UMP + ADP + H(+). The enzyme catalyses cytidine + ATP = CMP + ADP + H(+). Its pathway is pyrimidine metabolism; CTP biosynthesis via salvage pathway; CTP from cytidine: step 1/3. The protein operates within pyrimidine metabolism; UMP biosynthesis via salvage pathway; UMP from uridine: step 1/1. The chain is Uridine kinase from Chlamydia pneumoniae (Chlamydophila pneumoniae).